A 140-amino-acid polypeptide reads, in one-letter code: Nucleoside diphosphate kinase (140 aa).

Residues K11, F59, R87, T93, R104, and N114 each coordinate ATP. Catalysis depends on H117, which acts as the Pros-phosphohistidine intermediate.

This sequence belongs to the NDK family. In terms of assembly, homotetramer. Mg(2+) serves as cofactor.

The protein resides in the cytoplasm. The catalysed reaction is a 2'-deoxyribonucleoside 5'-diphosphate + ATP = a 2'-deoxyribonucleoside 5'-triphosphate + ADP. It carries out the reaction a ribonucleoside 5'-diphosphate + ATP = a ribonucleoside 5'-triphosphate + ADP. Functionally, major role in the synthesis of nucleoside triphosphates other than ATP. The ATP gamma phosphate is transferred to the NDP beta phosphate via a ping-pong mechanism, using a phosphorylated active-site intermediate. The chain is Nucleoside diphosphate kinase from Brucella melitensis biotype 1 (strain ATCC 23456 / CCUG 17765 / NCTC 10094 / 16M).